Consider the following 249-residue polypeptide: Putative TrmH family tRNA/rRNA methyltransferase (249 aa).

Residues Gly-196, Ile-216, and Leu-225 each contribute to the S-adenosyl-L-methionine site.

This sequence belongs to the class IV-like SAM-binding methyltransferase superfamily. RNA methyltransferase TrmH family.

In Staphylococcus epidermidis (strain ATCC 35984 / DSM 28319 / BCRC 17069 / CCUG 31568 / BM 3577 / RP62A), this protein is Putative TrmH family tRNA/rRNA methyltransferase.